The following is a 270-amino-acid chain: tRNA pseudouridine synthase A (270 aa).

The active-site Nucleophile is aspartate 55. Position 110 (tyrosine 110) interacts with substrate.

Belongs to the tRNA pseudouridine synthase TruA family.

The catalysed reaction is uridine(38/39/40) in tRNA = pseudouridine(38/39/40) in tRNA. Formation of pseudouridine at positions 38, 39 and 40 in the anticodon stem and loop of transfer RNAs. This is tRNA pseudouridine synthase A from Methanoculleus marisnigri (strain ATCC 35101 / DSM 1498 / JR1).